We begin with the raw amino-acid sequence, 270 residues long: 4-hydroxy-tetrahydrodipicolinate reductase (270 aa).

Residues 9–14 (GAGGRM) and Glu-35 each bind NAD(+). Residue Arg-36 participates in NADP(+) binding. NAD(+) is bound by residues 99 to 101 (GTT) and 123 to 126 (ASNF). His-156 serves as the catalytic Proton donor/acceptor. Position 157 (His-157) interacts with (S)-2,3,4,5-tetrahydrodipicolinate. The active-site Proton donor is the Lys-160. 166 to 167 (GT) serves as a coordination point for (S)-2,3,4,5-tetrahydrodipicolinate.

Belongs to the DapB family.

It localises to the cytoplasm. The catalysed reaction is (S)-2,3,4,5-tetrahydrodipicolinate + NAD(+) + H2O = (2S,4S)-4-hydroxy-2,3,4,5-tetrahydrodipicolinate + NADH + H(+). The enzyme catalyses (S)-2,3,4,5-tetrahydrodipicolinate + NADP(+) + H2O = (2S,4S)-4-hydroxy-2,3,4,5-tetrahydrodipicolinate + NADPH + H(+). Its pathway is amino-acid biosynthesis; L-lysine biosynthesis via DAP pathway; (S)-tetrahydrodipicolinate from L-aspartate: step 4/4. Functionally, catalyzes the conversion of 4-hydroxy-tetrahydrodipicolinate (HTPA) to tetrahydrodipicolinate. The polypeptide is 4-hydroxy-tetrahydrodipicolinate reductase (Haemophilus influenzae (strain PittEE)).